The chain runs to 182 residues: Ribosome maturation factor RimM (182 aa).

In terms of domain architecture, PRC barrel spans 101–174 (QDEYFIHQLY…QIVVRLLPGL (74 aa)).

It belongs to the RimM family. As to quaternary structure, binds ribosomal protein uS19.

The protein resides in the cytoplasm. An accessory protein needed during the final step in the assembly of 30S ribosomal subunit, possibly for assembly of the head region. Essential for efficient processing of 16S rRNA. May be needed both before and after RbfA during the maturation of 16S rRNA. It has affinity for free ribosomal 30S subunits but not for 70S ribosomes. This chain is Ribosome maturation factor RimM, found in Roseiflexus sp. (strain RS-1).